The primary structure comprises 612 residues: MLKLVILCFALFYNTVSSTRFLFGVEVKCDFDEVFQLTVSHWEDDGNTFWDRDEDITGRMTMFARKKIFFYQDGHHGFEFGKLEPYGWFLHNCTKNGNFREYRHGLSSTSGSNGLEYIEYTMSEFLKIVRANKKSDRKLDKTYLWESYLHQFEKGKTSFIPVEAFNRNLTVNFNECVKEGVIFETVVHDYDKNCDSIQVRWFARIEKVCGYRVLAQFIGADTKFWLNILSDDMFGLANAAMSDPNMDKIVYAPPLAINEEYQNDMVNYVNNCIDGEIVGQTSLSPKFDEGKALLSKHRFKVGQRLELLNYSNSTEIRVARIQEICGRRMNVSITKKDFPESLPDADDDRQVFSSGSQYWIDEGSFFIFPVGFAAVNGYQLNAKKEYIEHTNKIAQAIKNGENPRYDSDDVTFDQLAKDPIDPMIWRKVKVGQKFELIDPLAQQFNNLHVASILKFCKTEGYLIVGMDGPDALEDSFPIHINNTFMFPVGYAEKYNLELVPPDEFKGTFRWDEYLEKESAETLPLDLFKPMPSQERLDKFKVGLRLEAADMCENQFICPATVKSVHGRLINVNFDGWDEEFDELYDVDSHDILPIGWCEAHSYVLQPPKKYNY.

MBT repeat units follow at residues 143-249 (YLWE…MDKI), 263-380 (NDMV…GYQL), 381-501 (NAKK…LVPP), and 508-607 (FRWD…LQPP).

Interacts preferentially with histone H3 that is dimethylated or trimethylated at 'Lys-9'.

Its subcellular location is the nucleus. The protein localises to the chromosome. Synthetic multivulva class B (synMuvB) protein required to repress the induction of vulval development by Ras signaling. Unlike other synMuv proteins it does not associate with the multiprotein DRM complex and the NuRD-like complex. Interaction with methylated histone H3 is essential for vulva development. It has a role in maintaining genome stability. This chain is Protein lin-61 (lin-61), found in Caenorhabditis elegans.